We begin with the raw amino-acid sequence, 245 residues long: 1-(5-phosphoribosyl)-5-[(5-phosphoribosylamino)methylideneamino] imidazole-4-carboxamide isomerase (245 aa).

The active-site Proton acceptor is the Asp-7. The active-site Proton donor is the Asp-129.

It belongs to the HisA/HisF family.

It localises to the cytoplasm. The enzyme catalyses 1-(5-phospho-beta-D-ribosyl)-5-[(5-phospho-beta-D-ribosylamino)methylideneamino]imidazole-4-carboxamide = 5-[(5-phospho-1-deoxy-D-ribulos-1-ylimino)methylamino]-1-(5-phospho-beta-D-ribosyl)imidazole-4-carboxamide. Its pathway is amino-acid biosynthesis; L-histidine biosynthesis; L-histidine from 5-phospho-alpha-D-ribose 1-diphosphate: step 4/9. This chain is 1-(5-phosphoribosyl)-5-[(5-phosphoribosylamino)methylideneamino] imidazole-4-carboxamide isomerase, found in Serratia proteamaculans (strain 568).